We begin with the raw amino-acid sequence, 375 residues long: Chaperone protein DnaJ (375 aa).

The J domain occupies Asp5–Gly70. The CR-type zinc finger occupies Gly133–Asn211. 8 residues coordinate Zn(2+): Cys146, Cys149, Cys163, Cys166, Cys185, Cys188, Cys199, and Cys202. CXXCXGXG motif repeat units lie at residues Cys146–Gly153, Cys163–Gly170, Cys185–Gly192, and Cys199–Gly206.

Belongs to the DnaJ family. Homodimer. Zn(2+) is required as a cofactor.

The protein resides in the cytoplasm. Participates actively in the response to hyperosmotic and heat shock by preventing the aggregation of stress-denatured proteins and by disaggregating proteins, also in an autonomous, DnaK-independent fashion. Unfolded proteins bind initially to DnaJ; upon interaction with the DnaJ-bound protein, DnaK hydrolyzes its bound ATP, resulting in the formation of a stable complex. GrpE releases ADP from DnaK; ATP binding to DnaK triggers the release of the substrate protein, thus completing the reaction cycle. Several rounds of ATP-dependent interactions between DnaJ, DnaK and GrpE are required for fully efficient folding. Also involved, together with DnaK and GrpE, in the DNA replication of plasmids through activation of initiation proteins. This is Chaperone protein DnaJ from Acidithiobacillus ferrooxidans (strain ATCC 23270 / DSM 14882 / CIP 104768 / NCIMB 8455) (Ferrobacillus ferrooxidans (strain ATCC 23270)).